The chain runs to 234 residues: Elongation factor Tu, chloroplastic (234 aa).

A tr-type G domain is found at 1-125 (KNMITGAAQM…KVDSYIPTPE (125 aa)). A GTP-binding site is contributed by 47 to 50 (NKQD).

The protein belongs to the TRAFAC class translation factor GTPase superfamily. Classic translation factor GTPase family. EF-Tu/EF-1A subfamily.

The protein resides in the plastid. Its subcellular location is the chloroplast. It catalyses the reaction GTP + H2O = GDP + phosphate + H(+). Its function is as follows. GTP hydrolase that promotes the GTP-dependent binding of aminoacyl-tRNA to the A-site of ribosomes during protein biosynthesis. This chain is Elongation factor Tu, chloroplastic (tufA), found in Pandorina morum (Freshwater green alga).